The primary structure comprises 216 residues: MQLGAFRNRGVTVPDCLPGFGHINRYWDPEHQVFAAKILPGEFYVTRGNEMIVTTLGSCVSACVRDRRLGVGGMNHFMLPVRGGDPNHWEGDPLSTATRYGNHAMEQLINRVLALGGQRQELEVKLFGGGRVLAGVTDVGKRNIEFAESYVRTEGLRLIGRDLGGQYPRKVQYFPESGRARSKKLLRTRNDTVVRREEHYLHEIDEQPVSGDVDLF.

It belongs to the CheD family.

The enzyme catalyses L-glutaminyl-[protein] + H2O = L-glutamyl-[protein] + NH4(+). In terms of biological role, probably deamidates glutamine residues to glutamate on methyl-accepting chemotaxis receptors (MCPs), playing an important role in chemotaxis. This is Probable chemoreceptor glutamine deamidase CheD from Halorhodospira halophila (strain DSM 244 / SL1) (Ectothiorhodospira halophila (strain DSM 244 / SL1)).